We begin with the raw amino-acid sequence, 421 residues long: Nuclear envelope integral membrane protein 2 (421 aa).

Residues 1 to 22 (MPPGSWWLVLWLPPLATLPAGA) form the signal peptide. 5 consecutive transmembrane segments (helical) span residues 147–167 (NVVD…FFYA), 175–195 (VFYY…FVLL), 206–226 (TFGA…CQLM), 232–252 (LWCG…LCSF), and 279–299 (LVLV…MILL).

Belongs to the NEMP family.

The protein resides in the nucleus inner membrane. The chain is Nuclear envelope integral membrane protein 2 (Nemp2) from Rattus norvegicus (Rat).